The primary structure comprises 197 residues: Dephospho-CoA kinase (197 aa).

One can recognise a DPCK domain in the interval 3–197 (ILGLTGSIAM…TGCLVGQGSR (195 aa)). An ATP-binding site is contributed by 11 to 16 (AMGKST).

It belongs to the CoaE family.

Its subcellular location is the cytoplasm. The enzyme catalyses 3'-dephospho-CoA + ATP = ADP + CoA + H(+). It functions in the pathway cofactor biosynthesis; coenzyme A biosynthesis; CoA from (R)-pantothenate: step 5/5. In terms of biological role, catalyzes the phosphorylation of the 3'-hydroxyl group of dephosphocoenzyme A to form coenzyme A. This is Dephospho-CoA kinase from Zymomonas mobilis subsp. mobilis (strain ATCC 31821 / ZM4 / CP4).